Here is a 289-residue protein sequence, read N- to C-terminus: Small ribosomal subunit protein uS2C (289 aa).

This sequence belongs to the universal ribosomal protein uS2 family. In terms of assembly, component of the small ribosomal subunit. Mature ribosomes consist of a small (40S) and a large (60S) subunit. The 40S subunit contains about 33 different proteins and 1 molecule of RNA (18S). The 60S subunit contains about 49 different proteins and 3 molecules of RNA (25S, 5.8S and 5S). Interacts with rps21.

Its subcellular location is the cytoplasm. Required for the assembly and/or stability of the 40S ribosomal subunit. Required for the processing of the 20S rRNA-precursor to mature 18S rRNA in a late step of the maturation of 40S ribosomal subunits. The chain is Small ribosomal subunit protein uS2C (rps0c) from Schizosaccharomyces japonicus (strain yFS275 / FY16936) (Fission yeast).